We begin with the raw amino-acid sequence, 500 residues long: Probable cytosol aminopeptidase (500 aa).

Mn(2+) contacts are provided by Lys265 and Asp270. Lys277 is a catalytic residue. Residues Asp288, Asp347, and Glu349 each coordinate Mn(2+). Arg351 is an active-site residue.

It belongs to the peptidase M17 family. Mn(2+) serves as cofactor.

It is found in the cytoplasm. The catalysed reaction is Release of an N-terminal amino acid, Xaa-|-Yaa-, in which Xaa is preferably Leu, but may be other amino acids including Pro although not Arg or Lys, and Yaa may be Pro. Amino acid amides and methyl esters are also readily hydrolyzed, but rates on arylamides are exceedingly low.. It carries out the reaction Release of an N-terminal amino acid, preferentially leucine, but not glutamic or aspartic acids.. In terms of biological role, presumably involved in the processing and regular turnover of intracellular proteins. Catalyzes the removal of unsubstituted N-terminal amino acids from various peptides. In Rickettsia felis (strain ATCC VR-1525 / URRWXCal2) (Rickettsia azadi), this protein is Probable cytosol aminopeptidase.